The sequence spans 335 residues: MSLDINQIALHQLIKRDEQNLELVLRDSLLEPTATVVEMVAELHRVYSAKNKAYGLFNEESELAQALRLQRQGEEDFLAFSRAATGRLRDELTKYPFADGGIVLFCHYRYLAVEYLLVAVLNNLSSMRVNENLDINPTHYLDINHADIVARIDLTEWETNPESTRYLTFLKGRVGRKVADFFMDFLGASEGLNAKAQNRGLLQAVDDFTAEAQLDKAERQNVRRQVYSYCNERLQAGEEIELESLSKELSCVSEVSFSEFTAEKGYELEESFPADRSTLRQLTKYAGSGGGLTINFDAMLLGERIFWDPATDTLTIKGTPPNLRDQLQRRTSGGK.

Belongs to the YejK family.

The protein localises to the cytoplasm. Its subcellular location is the nucleoid. The protein is Nucleoid-associated protein YejK of Salmonella arizonae (strain ATCC BAA-731 / CDC346-86 / RSK2980).